The primary structure comprises 392 residues: Branched-chain-amino-acid aminotransferase, mitochondrial (392 aa).

Residues 1–27 constitute a mitochondrion transit peptide; that stretch reads MAAAALGQIWARKLLSVPWLLCGPRRY. A substrate-binding site is contributed by tyrosine 168. Lysine 229 carries the N6-(pyridoxal phosphate)lysine modification. Lysine 321 bears the N6-acetyllysine mark.

Belongs to the class-IV pyridoxal-phosphate-dependent aminotransferase family. In terms of assembly, homodimer. The cofactor is pyridoxal 5'-phosphate. Ubiquitous.

It is found in the mitochondrion. The enzyme catalyses L-leucine + 2-oxoglutarate = 4-methyl-2-oxopentanoate + L-glutamate. It carries out the reaction L-isoleucine + 2-oxoglutarate = (S)-3-methyl-2-oxopentanoate + L-glutamate. It catalyses the reaction L-valine + 2-oxoglutarate = 3-methyl-2-oxobutanoate + L-glutamate. In terms of biological role, catalyzes the first reaction in the catabolism of the essential branched chain amino acids leucine, isoleucine, and valine. May also function as a transporter of branched chain alpha-keto acids. This chain is Branched-chain-amino-acid aminotransferase, mitochondrial (BCAT2), found in Homo sapiens (Human).